The primary structure comprises 232 residues: Flagellar L-ring protein (232 aa).

An N-terminal signal peptide occupies residues 1-21 (MQKNAAHTYAISSLLVLSLTG). C22 is lipidated: N-palmitoyl cysteine. A lipid anchor (S-diacylglycerol cysteine) is attached at C22.

It belongs to the FlgH family. In terms of assembly, the basal body constitutes a major portion of the flagellar organelle and consists of four rings (L,P,S, and M) mounted on a central rod.

Its subcellular location is the cell outer membrane. The protein resides in the bacterial flagellum basal body. Functionally, assembles around the rod to form the L-ring and probably protects the motor/basal body from shearing forces during rotation. This chain is Flagellar L-ring protein, found in Shigella boydii serotype 4 (strain Sb227).